Reading from the N-terminus, the 102-residue chain is RNA-binding protein Hfq (102 aa).

The Sm domain maps to 9 to 68; it reads DPFLNALRRERVPVSIYLVNGIKLQGQIESFDQFVILLKNTVSQMVYKHAISTVVPSRPV. A disordered region spans residues 63–102; that stretch reads VPSRPVSHHSNNTGGGSNNYHHGSSPAPSSQPQQDSADAE. Residues 70–102 show a composition bias toward low complexity; sequence HHSNNTGGGSNNYHHGSSPAPSSQPQQDSADAE.

The protein belongs to the Hfq family. Homohexamer.

Functionally, RNA chaperone that binds small regulatory RNA (sRNAs) and mRNAs to facilitate mRNA translational regulation in response to envelope stress, environmental stress and changes in metabolite concentrations. Also binds with high specificity to tRNAs. The polypeptide is RNA-binding protein Hfq (Erwinia tasmaniensis (strain DSM 17950 / CFBP 7177 / CIP 109463 / NCPPB 4357 / Et1/99)).